We begin with the raw amino-acid sequence, 581 residues long: Arginine--tRNA ligase (581 aa).

The 'HIGH' region signature appears at A131–H141.

The protein belongs to the class-I aminoacyl-tRNA synthetase family. In terms of assembly, monomer.

Its subcellular location is the cytoplasm. The enzyme catalyses tRNA(Arg) + L-arginine + ATP = L-arginyl-tRNA(Arg) + AMP + diphosphate. This chain is Arginine--tRNA ligase, found in Paracoccus denitrificans (strain Pd 1222).